A 138-amino-acid chain; its full sequence is Ribosome-binding factor A (138 aa).

The tract at residues 116–138 (VAQDSQHQEGPASPDAKPESTEE) is disordered.

The protein belongs to the RbfA family. In terms of assembly, monomer. Binds 30S ribosomal subunits, but not 50S ribosomal subunits or 70S ribosomes.

It localises to the cytoplasm. In terms of biological role, one of several proteins that assist in the late maturation steps of the functional core of the 30S ribosomal subunit. Associates with free 30S ribosomal subunits (but not with 30S subunits that are part of 70S ribosomes or polysomes). Required for efficient processing of 16S rRNA. May interact with the 5'-terminal helix region of 16S rRNA. The polypeptide is Ribosome-binding factor A (Pseudomonas syringae pv. tomato (strain ATCC BAA-871 / DC3000)).